The primary structure comprises 597 residues: Arginine--tRNA ligase (597 aa).

A 'HIGH' region motif is present at residues 138-148 (ANPTGPMHVGH).

The protein belongs to the class-I aminoacyl-tRNA synthetase family. Monomer.

Its subcellular location is the cytoplasm. The catalysed reaction is tRNA(Arg) + L-arginine + ATP = L-arginyl-tRNA(Arg) + AMP + diphosphate. The polypeptide is Arginine--tRNA ligase (Nitrobacter winogradskyi (strain ATCC 25391 / DSM 10237 / CIP 104748 / NCIMB 11846 / Nb-255)).